A 268-amino-acid chain; its full sequence is (+)-cis,trans-nepetalactol synthase NEPS2 (268 aa).

Residues 16-22, 41-43, 65-66, Asn-92, 163-167, and 196-200 contribute to the NAD(+) site; these read GGASGIG, DIQ, DI, YVMSK, and VLTPL.

This sequence belongs to the short-chain dehydrogenases/reductases (SDR) family.

The enzyme catalyses (S)-8-oxocitronellyl enol = cis-trans-nepetalactol. Functionally, functions as a non-oxidoreductive cyclase to promote the formation of cis-trans-nepetalactol. Cis-trans-nepetalactol is then oxidized by NEPS1 into cis-trans-nepetalactone, which belongs to a family of metabolites that are both insect-repellent and have euphoric effect in cats. Binds NAD(+) as classical short-chain dehydrogenase/reductase (SDR), but does not utilize it for its redox-neutral cyclase activity. This Nepeta racemosa (Catmint) protein is (+)-cis,trans-nepetalactol synthase NEPS2.